The chain runs to 203 residues: V-type ATP synthase subunit D (203 aa).

It belongs to the V-ATPase D subunit family.

Produces ATP from ADP in the presence of a proton gradient across the membrane. This Streptococcus pneumoniae (strain Hungary19A-6) protein is V-type ATP synthase subunit D.